A 390-amino-acid chain; its full sequence is S-adenosylmethionine synthase 4 (390 aa).

Residue glutamate 9 coordinates Mg(2+). An ATP-binding site is contributed by histidine 15. Glutamate 43 contributes to the K(+) binding site. L-methionine is bound by residues glutamate 56 and glutamine 99. ATP is bound by residues aspartate 167 to lysine 169, serine 235 to phenylalanine 238, aspartate 246, arginine 252 to lysine 253, alanine 269, lysine 273, and lysine 277. L-methionine is bound at residue aspartate 246. Lysine 277 is an L-methionine binding site.

The protein belongs to the AdoMet synthase family. As to quaternary structure, homotetramer. Mn(2+) is required as a cofactor. Mg(2+) serves as cofactor. It depends on Co(2+) as a cofactor. The cofactor is K(+). As to expression, mostly expressed in flowers, seedpods and roots, and, to a lower extent, in stems and leaves.

The protein resides in the cytoplasm. The catalysed reaction is L-methionine + ATP + H2O = S-adenosyl-L-methionine + phosphate + diphosphate. It participates in amino-acid biosynthesis; S-adenosyl-L-methionine biosynthesis; S-adenosyl-L-methionine from L-methionine: step 1/1. Its function is as follows. Catalyzes the formation of S-adenosylmethionine from methionine and ATP. The reaction comprises two steps that are both catalyzed by the same enzyme: formation of S-adenosylmethionine (AdoMet) and triphosphate, and subsequent hydrolysis of the triphosphate. This Brassica juncea (Indian mustard) protein is S-adenosylmethionine synthase 4 (MSAMS4).